The chain runs to 364 residues: WAT1-related protein At3g30340 (364 aa).

Transmembrane regions (helical) follow at residues Trp-9 to Phe-29, Val-41 to Leu-61, Ser-76 to Leu-96, Thr-102 to Phe-122, Leu-138 to Ala-158, Trp-183 to Val-203, Tyr-215 to Ile-235, Val-251 to Trp-271, Gly-277 to Phe-297, and Ile-304 to Trp-324. EamA domains lie at Asn-26–Thr-152 and Ile-195–Leu-323.

This sequence belongs to the drug/metabolite transporter (DMT) superfamily. Plant drug/metabolite exporter (P-DME) (TC 2.A.7.4) family.

The protein resides in the membrane. This chain is WAT1-related protein At3g30340, found in Arabidopsis thaliana (Mouse-ear cress).